Reading from the N-terminus, the 254-residue chain is Mediator of RNA polymerase II transcription subunit 6 (254 aa).

Positions 190–254 (PTFYQTKPGE…PPPEKRARVQ (65 aa)) are disordered. Residues 227–245 (PPAPPAPPRPPPQTTPNKP) are compositionally biased toward pro residues.

This sequence belongs to the Mediator complex subunit 6 family. Component of the Mediator complex.

The protein resides in the nucleus. In terms of biological role, component of the Mediator complex, a coactivator involved in the regulated transcription of nearly all RNA polymerase II-dependent genes. Mediator functions as a bridge to convey information from gene-specific regulatory proteins to the basal RNA polymerase II transcription machinery. Mediator is recruited to promoters by direct interactions with regulatory proteins and serves as a scaffold for the assembly of a functional preinitiation complex with RNA polymerase II and the general transcription factors. The sequence is that of Mediator of RNA polymerase II transcription subunit 6 (med6) from Danio rerio (Zebrafish).